The sequence spans 92 residues: Small ribosomal subunit protein uS19 (92 aa).

Belongs to the universal ribosomal protein uS19 family.

Protein S19 forms a complex with S13 that binds strongly to the 16S ribosomal RNA. This Yersinia pestis (strain Pestoides F) protein is Small ribosomal subunit protein uS19.